Consider the following 571-residue polypeptide: Potassium-transporting ATPase potassium-binding subunit (571 aa).

Helical transmembrane passes span 3–23 (LIGW…VKPL), 64–84 (LGYG…LYAI), 135–155 (LGLT…AVAL), 179–199 (LYVL…QGMP), 254–274 (LANL…TNVF), 284–304 (GWAI…VTYA), 330–350 (FGIV…CGAV), 357–376 (FTAL…EIIV), 421–441 (MLAI…ATVL), 488–508 (LALG…AIAG), and 527–547 (GGLF…LTFF).

This sequence belongs to the KdpA family. The system is composed of three essential subunits: KdpA, KdpB and KdpC.

It is found in the cell inner membrane. Its function is as follows. Part of the high-affinity ATP-driven potassium transport (or Kdp) system, which catalyzes the hydrolysis of ATP coupled with the electrogenic transport of potassium into the cytoplasm. This subunit binds the periplasmic potassium ions and delivers the ions to the membrane domain of KdpB through an intramembrane tunnel. This Methylorubrum populi (strain ATCC BAA-705 / NCIMB 13946 / BJ001) (Methylobacterium populi) protein is Potassium-transporting ATPase potassium-binding subunit.